Here is a 1805-residue protein sequence, read N- to C-terminus: Obscurin-like protein 1 (1805 aa).

The residue at position 10 (Ser-10) is a Phosphoserine. The Ig-like 1 domain maps to 12–100 (PCFLRFPRPV…GEAYAAAAVT (89 aa)). Positions 17–19 (FPR) are interaction with TTN. Cys-33 and Cys-84 are disulfide-bonded. The segment at 85 to 94 (RARNAAGEAY) is interaction with TTN. A compositionally biased stretch (pro residues) spans 104–122 (PPAPEPEPQSSECPPPPPG). Residues 104–131 (PPAPEPEPQSSECPPPPPGTGEGAPVFL) are disordered. Ig-like domains lie at 128-225 (PVFL…ALLQ), 240-330 (PPVR…QTLS), and 339-425 (PRLR…ANVT). 3 disulfides stabilise this stretch: Cys-149/Cys-209, Cys-267/Cys-319, and Cys-362/Cys-412. The Fibronectin type-III domain maps to 517–615 (PPGPPVLVEM…FNGSAHLVPT (99 aa)). Ig-like domains follow at residues 720–800 (PQDK…FSVT), 804–891 (PPVH…FTVT), 902–982 (PNGK…FTIT), 986–1075 (PPVR…VTVT), 1078–1165 (PERI…FNVS), 1176–1261 (PEAV…FNVQ), 1266–1351 (PPVK…ARLH), 1355–1442 (TELL…ARLS), 1536–1628 (PVTI…REVS), and 1702–1798 (PAQS…ADTQ). Disulfide bonds link Cys-738–Cys-788, Cys-829–Cys-879, Cys-920–Cys-970, Cys-1011–Cys-1061, Cys-1103–Cys-1153, and Cys-1195–Cys-1245. A disulfide bond links Cys-1558 and Cys-1608.

In terms of assembly, component of the 3M complex, composed of core components CUL7, CCDC8 and OBSL1. Interacts with CCDC8. Interacts with CUL7; the interaction is direct. Interacts with FBXW8. Interacts (via N-terminal Ig-like domain) with TTN/titin (via C-terminal Ig-like domain); the interaction is direct. As to expression, expressed in granule neurons, with levels decreasing with neuronal maturation.

The protein localises to the cytoplasm. It localises to the perinuclear region. It is found in the golgi apparatus. Its function is as follows. Core component of the 3M complex, a complex required to regulate microtubule dynamics and genome integrity. It is unclear how the 3M complex regulates microtubules, it could act by controlling the level of a microtubule stabilizer. Acts as a regulator of the Cul7-RING(FBXW8) ubiquitin-protein ligase, playing a critical role in the ubiquitin ligase pathway that regulates Golgi morphogenesis and dendrite patterning in brain. Required to localize CUL7 to the Golgi apparatus in neurons. This Rattus norvegicus (Rat) protein is Obscurin-like protein 1 (Obsl1).